Consider the following 340-residue polypeptide: Olfactory receptor 5T3 (340 aa).

The Extracellular segment spans residues 1-55 (MDSTFTGYNLYNLQVKTEMDKLSSGLDIYRNPLKNKTEVTMFILTGFTDDFELQV). An N-linked (GlcNAc...) asparagine glycan is attached at Asn35. The chain crosses the membrane as a helical span at residues 56 to 76 (FLFLLFFAIYLFTLIGNLGLV). Residues 77 to 84 (VLVIEDSW) are Cytoplasmic-facing. A helical membrane pass occupies residues 85–105 (LHNPMYYFLSVLSFLDACYST). Residues 106-129 (VVTPKMLVNFLAKNKSISFIGCAT) are Extracellular-facing. N-linked (GlcNAc...) asparagine glycosylation is present at Asn119. Cysteines 127 and 219 form a disulfide. Residues 130–150 (QMLLFVTFGTTECFLLAAMAY) form a helical membrane-spanning segment. Topologically, residues 151 to 169 (DHYVAIYNPLLYSVSMSPR) are cytoplasmic. Residues 170–190 (VYVPLITASYVAGILHATIHI) traverse the membrane as a helical segment. At 191-226 (VATFSLSFCGSNEIRHVFCDMPPLLAISCSDTHTNQ) the chain is on the extracellular side. A helical transmembrane segment spans residues 227–247 (LLLFYFVGSIEIVTILIVLIS). Over 248 to 267 (CDFILLSILKMHSAKGRQKA) the chain is Cytoplasmic. Residues 268 to 288 (FSTCGSHLTGVTIYHGTILVS) form a helical membrane-spanning segment. Over 289–301 (YMRPSSSYASDHD) the chain is Extracellular. The chain crosses the membrane as a helical span at residues 302–322 (IIVSIFYTIVIPKLNPIIYSL). Residues 323–340 (RNKEVKKAVKKMLKLVYK) lie on the Cytoplasmic side of the membrane.

Belongs to the G-protein coupled receptor 1 family.

It localises to the cell membrane. Its function is as follows. Odorant receptor. This is Olfactory receptor 5T3 (OR5T3) from Homo sapiens (Human).